The sequence spans 386 residues: S-adenosylmethionine synthase (386 aa).

His-16 serves as a coordination point for ATP. Asp-18 serves as a coordination point for Mg(2+). K(+) is bound at residue Glu-44. L-methionine is bound by residues Glu-57 and Gln-100. The segment at 100-110 is flexible loop; that stretch reads QSPDINQGVDR. ATP-binding positions include 164-166, 230-231, Asp-239, 245-246, Ala-262, and Lys-266; these read DGK, KF, and RK. L-methionine is bound at residue Asp-239. Lys-270 is an L-methionine binding site.

This sequence belongs to the AdoMet synthase family. Homotetramer; dimer of dimers. The cofactor is Mg(2+). It depends on K(+) as a cofactor.

The protein resides in the cytoplasm. It catalyses the reaction L-methionine + ATP + H2O = S-adenosyl-L-methionine + phosphate + diphosphate. The protein operates within amino-acid biosynthesis; S-adenosyl-L-methionine biosynthesis; S-adenosyl-L-methionine from L-methionine: step 1/1. Catalyzes the formation of S-adenosylmethionine (AdoMet) from methionine and ATP. The overall synthetic reaction is composed of two sequential steps, AdoMet formation and the subsequent tripolyphosphate hydrolysis which occurs prior to release of AdoMet from the enzyme. This Wolinella succinogenes (strain ATCC 29543 / DSM 1740 / CCUG 13145 / JCM 31913 / LMG 7466 / NCTC 11488 / FDC 602W) (Vibrio succinogenes) protein is S-adenosylmethionine synthase.